The sequence spans 277 residues: Probable xyloglucan endotransglucosylase/hydrolase protein 11 (277 aa).

The signal sequence occupies residues 1–24 (MRGSDQKILLMVMVVVAVVAAAQG). A GH16 domain is found at 32-209 (VTWGNNYYQT…PKQMPYIAKF (178 aa)). Asn50 carries an N-linked (GlcNAc...) asparagine glycan. The active-site Nucleophile is the Glu107. Xyloglucan is bound by residues 123–125 (NTN) and 133–135 (GKD). N-linked (GlcNAc...) asparagine glycosylation is present at Asn194. 2 cysteine pairs are disulfide-bonded: Cys217-Cys227 and Cys260-Cys273. Residue Arg265 participates in xyloglucan binding.

It belongs to the glycosyl hydrolase 16 family. XTH group 1 subfamily. Contains at least one intrachain disulfide bond essential for its enzymatic activity.

Its subcellular location is the secreted. It localises to the cell wall. The protein localises to the extracellular space. The protein resides in the apoplast. It carries out the reaction breaks a beta-(1-&gt;4) bond in the backbone of a xyloglucan and transfers the xyloglucanyl segment on to O-4 of the non-reducing terminal glucose residue of an acceptor, which can be a xyloglucan or an oligosaccharide of xyloglucan.. Functionally, may catalyze xyloglucan endohydrolysis (XEH) and/or endotransglycosylation (XET). Cleaves and religates xyloglucan polymers, an essential constituent of the primary cell wall, and thereby participates in cell wall construction of growing tissues. This chain is Probable xyloglucan endotransglucosylase/hydrolase protein 11 (XTH11), found in Arabidopsis thaliana (Mouse-ear cress).